We begin with the raw amino-acid sequence, 250 residues long: 3-deoxy-manno-octulosonate cytidylyltransferase (250 aa).

Belongs to the KdsB family.

It localises to the cytoplasm. The catalysed reaction is 3-deoxy-alpha-D-manno-oct-2-ulosonate + CTP = CMP-3-deoxy-beta-D-manno-octulosonate + diphosphate. It functions in the pathway nucleotide-sugar biosynthesis; CMP-3-deoxy-D-manno-octulosonate biosynthesis; CMP-3-deoxy-D-manno-octulosonate from 3-deoxy-D-manno-octulosonate and CTP: step 1/1. The protein operates within bacterial outer membrane biogenesis; lipopolysaccharide biosynthesis. Its function is as follows. Activates KDO (a required 8-carbon sugar) for incorporation into bacterial lipopolysaccharide in Gram-negative bacteria. This is 3-deoxy-manno-octulosonate cytidylyltransferase from Syntrophotalea carbinolica (strain DSM 2380 / NBRC 103641 / GraBd1) (Pelobacter carbinolicus).